Here is a 258-residue protein sequence, read N- to C-terminus: UPF0246 protein YaaA (258 aa).

It belongs to the UPF0246 family.

In Escherichia coli (strain SE11), this protein is UPF0246 protein YaaA.